Consider the following 601-residue polypeptide: Protein NRT1/ PTR FAMILY 4.4 (601 aa).

Helical transmembrane passes span 44 to 64 (AALF…AVGN) and 82 to 102 (ANLV…GGFL). Position 112 is a phosphothreonine (Thr112). Helical transmembrane passes span 113–133 (MLVF…QAHL), 160–180 (TLYT…PNII), 198–218 (FFNA…TLLV), 228–248 (VGFG…VAGT), 337–357 (ILLS…ILAQ), 386–406 (AIPY…FVPL), 420–440 (LQRI…AALV), 453–473 (VMLS…SEMF), 493–513 (FLTA…SVLV), and 544–564 (HFYW…LFWS).

Belongs to the major facilitator superfamily. Proton-dependent oligopeptide transporter (POT/PTR) (TC 2.A.17) family. Expressed in shoots, roots and stems.

Its subcellular location is the membrane. This Arabidopsis thaliana (Mouse-ear cress) protein is Protein NRT1/ PTR FAMILY 4.4 (NPF4.4).